We begin with the raw amino-acid sequence, 344 residues long: Heat-inducible transcription repressor HrcA (344 aa).

Belongs to the HrcA family.

In terms of biological role, negative regulator of class I heat shock genes (grpE-dnaK-dnaJ and groELS operons). Prevents heat-shock induction of these operons. In Geobacillus stearothermophilus (Bacillus stearothermophilus), this protein is Heat-inducible transcription repressor HrcA.